Consider the following 200-residue polypeptide: Nascent polypeptide-associated complex subunit alpha (200 aa).

Residues 1–19 show a composition bias toward basic and acidic residues; that stretch reads MADPRIEELPDEETKKPTV. 2 disordered regions span residues 1 to 52 and 120 to 165; these read MADP…SRNE and QQLA…EDKD. Over residues 20–34 the composition is skewed to acidic residues; that stretch reads EELDESSDEESDAEA. Residues 49–114 enclose the NAC-A/B domain; the sequence is SRNEKKARKA…AKIEDLNASA (66 aa). Residues 127–143 show a composition bias toward basic and acidic residues; it reads AEHDHAGHTHDHKHEAA. Residues 144 to 160 are compositionally biased toward acidic residues; the sequence is KEEEEEEDDGEEVDAEG. Positions 161–200 constitute a UBA domain; the sequence is IEDKDIELVMTQANVSRKKAIKALKENDNDIVNSIMALSV.

It belongs to the NAC-alpha family. As to quaternary structure, part of the nascent polypeptide-associated complex (NAC), consisting of EGD2 and EGD1. NAC associates with ribosomes via EGD1.

The protein resides in the cytoplasm. The protein localises to the nucleus. Functionally, component of the nascent polypeptide-associated complex (NAC), a dynamic component of the ribosomal exit tunnel, protecting the emerging polypeptides from interaction with other cytoplasmic proteins to ensure appropriate nascent protein targeting. The NAC complex also promotes mitochondrial protein import by enhancing productive ribosome interactions with the outer mitochondrial membrane and blocks the inappropriate interaction of ribosomes translating non-secretory nascent polypeptides with translocation sites in the membrane of the endoplasmic reticulum. EGD2 may also be involved in transcription regulation. This is Nascent polypeptide-associated complex subunit alpha (EGD2) from Chaetomium globosum (strain ATCC 6205 / CBS 148.51 / DSM 1962 / NBRC 6347 / NRRL 1970) (Soil fungus).